Consider the following 377-residue polypeptide: MSVTELKERHMAATQTVNDLREKLKQKRLQLLDTDVSGYARSQGKTPVTFGPTDLVCCRILQGHTGKVYSLDWTPEKNRIVSASQDGRLIVWNALTSQKTHAIKLPCAWVMTCAFSPSGHSVACGGLDSVCSIFNLNSPIDKDGNHPVSRMLSGHKGYVSSCQYVPDEDTHLITSSGDQTCVLWDITTGLRTSVFGGEFQFGHTADVQSVSISSSNPRLFVSGSCDTTARLWDTRVASRAQRTFYCHEGDVNTVKFFPDGNRFGTGSEDGTCRLFDIRTGHQLQVYYQPHGDGDIPHVTSMAFSISGRLLFVRYSNGDCYVWDTLLAKVVLNLGAVQNSHEGXISCLGLSADGXXLCTGSWDTNLKIWAFGGHRSVI.

WD repeat units lie at residues 63–93 (GHTG…IVWN), 105–135 (LPCA…SIFN), 154–185 (GHKG…VLWD), 202–233 (GHTA…RLWD), 246–276 (CHEG…RLFD), 293–323 (GDIP…YVWD), and 339–369 (SHEG…KIWA).

This sequence belongs to the WD repeat G protein beta family. In terms of assembly, g proteins are composed of 3 units, alpha, beta and gamma.

The protein localises to the cell membrane. It localises to the endoplasmic reticulum membrane. In terms of biological role, guanine nucleotide-binding proteins (G proteins) are involved as a modulator or transducer in various transmembrane signaling systems. The beta and gamma chains are required for the GTPase activity, for replacement of GDP by GTP, and for G protein-effector interaction. The polypeptide is Guanine nucleotide-binding protein subunit beta (Nicotiana plumbaginifolia (Leadwort-leaved tobacco)).